Reading from the N-terminus, the 477-residue chain is UDP-N-acetylmuramoylalanine--D-glutamate ligase (477 aa).

125–131 (GTNGKST) lines the ATP pocket.

It belongs to the MurCDEF family.

The protein localises to the cytoplasm. It carries out the reaction UDP-N-acetyl-alpha-D-muramoyl-L-alanine + D-glutamate + ATP = UDP-N-acetyl-alpha-D-muramoyl-L-alanyl-D-glutamate + ADP + phosphate + H(+). It participates in cell wall biogenesis; peptidoglycan biosynthesis. Its function is as follows. Cell wall formation. Catalyzes the addition of glutamate to the nucleotide precursor UDP-N-acetylmuramoyl-L-alanine (UMA). The sequence is that of UDP-N-acetylmuramoylalanine--D-glutamate ligase from Rhodospirillum rubrum (strain ATCC 11170 / ATH 1.1.1 / DSM 467 / LMG 4362 / NCIMB 8255 / S1).